Here is a 237-residue protein sequence, read N- to C-terminus: MELTAKPRTPKQKLDESMIAAVAYNKENNVSFALDRKAFDRAFRQQSTTGLFDITVEGGETFPALVKAVQMDKRKRAPIHVDFYMVTYGEPVEVSVPVHTTGRSQGEVQGGLVDIVVHNLQIVAPGPRRIPQELVVDVTKMNIGDHITAGDIKLPEGCTLAADPELTVVSVLPPRLTAEELEAEVQAAQVAGLVAAGELSEEAAEAVLEGDASLEEVKAEASEDNAGTDSEDNSDAQ.

The segment at 1 to 104 (MELTAKPRTP…SVPVHTTGRS (104 aa)) is N-terminal domain. A middle domain region spans residues 105 to 189 (QGEVQGGLVD…ELEAEVQAAQ (85 aa)). The segment at 190–237 (VAGLVAAGELSEEAAEAVLEGDASLEEVKAEASEDNAGTDSEDNSDAQ) is C-terminal domain. The interval 205 to 237 (EAVLEGDASLEEVKAEASEDNAGTDSEDNSDAQ) is disordered.

This sequence belongs to the bacterial ribosomal protein bL25 family. CTC subfamily. As to quaternary structure, part of the 50S ribosomal subunit. Contacts proteins L11 and L16, the A site tRNA, and the 5S and 23S rRNAs.

Its function is as follows. This is one of 3 proteins that mediate the attachment of the 5S rRNA onto the large ribosomal subunit. This protein has three domains. The N-terminal one is bound on the solvent face, the middle domain fills the space between the 5S rRNA and the L11 arm contacting the 23S rRNA while the C-terminal domain is on the edge of the intersubunit interface and contacts the A site. The protein conformation changes upon binding of a tRNA mimic to the A site, although the mimic does not interact directly with CTC itself, consistent with CTCs presumed role in moderating A site binding. The polypeptide is Large ribosomal subunit protein bL25 (rplY) (Deinococcus radiodurans (strain ATCC 13939 / DSM 20539 / JCM 16871 / CCUG 27074 / LMG 4051 / NBRC 15346 / NCIMB 9279 / VKM B-1422 / R1)).